The following is a 754-amino-acid chain: MPSCYEHSAQSPRPLSVLAEYFPKGYSVFYKANTETCPEANQYSKALVDFYTQELNQAEDTNLTLGQMGLGDGVSLLLLWQSLLQCRKNNPELSRLKVHLLIFEPHAISALELKQLWQALGLFDANSPVAPQAEQFIAGKMAQINGAQRFILEQGQLRIDVHFGDLHSNLTELMTPEHRVTHWHCLPHIAHTQTEFAETQASQLQFNQVQSNANQLNQAILWQMGRLSQDNASLYLDGENFKPSASDNNALTDCTLIKMATQAGFSRYSPNLFQASSDSCNAIPLGERRALRQQQENRQAHCPVPNSLGERRQAVNNSDSIAIIGGGIAGACLALSLAERGKAVTLYCKDDKLGDGATGNRQGAIYPLLTPENSHLSQFFQQAFLFSRRRLLALLHEVYPIGHQLCGVLQTGFDERSEARLEKIIQGQHWPEEIAYAVSPEQASALAGVSIDKPGFYYPNGGWICPFEFARACLEKAKSLANVEVKLNSTISCIKPLAANVDSKDASGCTSQASGTLWGLYHQGEIVGSHQQVVLASGASITAFEQTQALQMSGFRGQVSHVPSKGELAKLNTVICANGYLTPAFNSTHCVGASYVKDPEHLDFCSDEQAENGQKMQQSFPNLEWPQDIDVSDRNARVGVRMVTRDHFPMMGCAPDIEEIISRYQTLNASPQASQNNYAKQCQQYWQQTPAPVHHNLFVLGGLGSRGLSSAPLAAECLAAQLCGEIAPISATTLALLNPNRMWMRKLLKGKALC.

Positions 1 to 320 are tRNA (mnm(5)s(2)U34)-methyltransferase; sequence MPSCYEHSAQ…RRQAVNNSDS (320 aa). The tract at residues 324-754 is FAD-dependent cmnm(5)s(2)U34 oxidoreductase; that stretch reads IGGGIAGACL…RKLLKGKALC (431 aa).

It in the N-terminal section; belongs to the methyltransferase superfamily. tRNA (mnm(5)s(2)U34)-methyltransferase family. In the C-terminal section; belongs to the DAO family. FAD is required as a cofactor.

The protein resides in the cytoplasm. The catalysed reaction is 5-aminomethyl-2-thiouridine(34) in tRNA + S-adenosyl-L-methionine = 5-methylaminomethyl-2-thiouridine(34) in tRNA + S-adenosyl-L-homocysteine + H(+). Catalyzes the last two steps in the biosynthesis of 5-methylaminomethyl-2-thiouridine (mnm(5)s(2)U) at the wobble position (U34) in tRNA. Catalyzes the FAD-dependent demodification of cmnm(5)s(2)U34 to nm(5)s(2)U34, followed by the transfer of a methyl group from S-adenosyl-L-methionine to nm(5)s(2)U34, to form mnm(5)s(2)U34. In Shewanella denitrificans (strain OS217 / ATCC BAA-1090 / DSM 15013), this protein is tRNA 5-methylaminomethyl-2-thiouridine biosynthesis bifunctional protein MnmC.